The primary structure comprises 249 residues: ATP synthase subunit a (249 aa).

A run of 5 helical transmembrane segments spans residues 35–55 (ILLT…ISSL), 92–112 (VPFI…GALV), 131–151 (INTT…AGIS), 187–209 (LFGN…PLFI), and 221–241 (SAIQ…EALE).

It belongs to the ATPase A chain family. As to quaternary structure, F-type ATPases have 2 components, CF(1) - the catalytic core - and CF(0) - the membrane proton channel. CF(1) has five subunits: alpha(3), beta(3), gamma(1), delta(1), epsilon(1). CF(0) has four main subunits: a, b, b' and c.

It is found in the cellular thylakoid membrane. In terms of biological role, key component of the proton channel; it plays a direct role in the translocation of protons across the membrane. In Trichodesmium erythraeum (strain IMS101), this protein is ATP synthase subunit a.